The chain runs to 266 residues: Glutamate racemase (266 aa).

Substrate is bound by residues 9-10 (DS) and 41-42 (YG). C73 serves as the catalytic Proton donor/acceptor. 74–75 (NT) is a binding site for substrate. The active-site Proton donor/acceptor is C183. 184-185 (TH) contacts substrate.

Belongs to the aspartate/glutamate racemases family.

It catalyses the reaction L-glutamate = D-glutamate. It participates in cell wall biogenesis; peptidoglycan biosynthesis. In terms of biological role, provides the (R)-glutamate required for cell wall biosynthesis. This chain is Glutamate racemase, found in Shewanella woodyi (strain ATCC 51908 / MS32).